The following is a 134-amino-acid chain: Phosphoribosyl-AMP cyclohydrolase (134 aa).

D77 is a Mg(2+) binding site. Zn(2+) is bound at residue C78. Mg(2+) contacts are provided by D79 and D81. 2 residues coordinate Zn(2+): C95 and C102.

The protein belongs to the PRA-CH family. As to quaternary structure, homodimer. The cofactor is Mg(2+). Zn(2+) serves as cofactor.

The protein resides in the cytoplasm. It carries out the reaction 1-(5-phospho-beta-D-ribosyl)-5'-AMP + H2O = 1-(5-phospho-beta-D-ribosyl)-5-[(5-phospho-beta-D-ribosylamino)methylideneamino]imidazole-4-carboxamide. It functions in the pathway amino-acid biosynthesis; L-histidine biosynthesis; L-histidine from 5-phospho-alpha-D-ribose 1-diphosphate: step 3/9. Functionally, catalyzes the hydrolysis of the adenine ring of phosphoribosyl-AMP. This is Phosphoribosyl-AMP cyclohydrolase from Pseudomonas aeruginosa (strain UCBPP-PA14).